The following is a 111-amino-acid chain: N-alpha-acetyltransferase 38-B, NatC auxiliary subunit (111 aa).

Residues 28 to 106 (TARHKLESLL…IVSIQVELET (79 aa)) enclose the Sm domain.

Belongs to the snRNP Sm proteins family. In terms of assembly, component of the N-terminal acetyltransferase C (NatC) complex, which is composed of naa35, naa38 and naa30.

The protein resides in the cytoplasm. Auxillary component of the N-terminal acetyltransferase C (NatC) complex which catalyzes acetylation of N-terminal methionine residues. In Xenopus laevis (African clawed frog), this protein is N-alpha-acetyltransferase 38-B, NatC auxiliary subunit (naa38-b).